The sequence spans 62 residues: MEKLPHLLRHWVEHTKEHRERFEEVASKIESTHPEIAKKLKEAAEKYREVEEILKKAVDMVG.

Residues Lys-28–Val-61 are a coiled coil.

This is an uncharacterized protein from Archaeoglobus fulgidus (strain ATCC 49558 / DSM 4304 / JCM 9628 / NBRC 100126 / VC-16).